We begin with the raw amino-acid sequence, 228 residues long: UPF0758 protein SAB1521c (228 aa).

Residues 102 to 224 (KITQPSDVAD…FTSLVEAGYF (123 aa)) form the MPN domain. Zn(2+) contacts are provided by histidine 173, histidine 175, and aspartate 186. The JAMM motif signature appears at 173–186 (HNHPSGDVTPSQED).

This sequence belongs to the UPF0758 family.

This Staphylococcus aureus (strain bovine RF122 / ET3-1) protein is UPF0758 protein SAB1521c.